The primary structure comprises 194 residues: Transposon Tn2501 resolvase (194 aa).

The 141-residue stretch at 3–143 (RVFAYCRVST…SGIARAKATG (141 aa)) folds into the Resolvase/invertase-type recombinase catalytic domain. S11 (O-(5'-phospho-DNA)-serine intermediate) is an active-site residue. Residues 170–189 (ISAIAREFNTTRQTILRVKA) constitute a DNA-binding region (H-T-H motif).

The protein belongs to the site-specific recombinase resolvase family.

Its function is as follows. Resolvase catalyzes the resolution (a site-specific recombination) of the cointegrated replicon to yield the final transposition products. In Escherichia coli, this protein is Transposon Tn2501 resolvase (tnpR).